Here is a 228-residue protein sequence, read N- to C-terminus: Large ribosomal subunit protein uL3 (228 aa).

Residues 157–176 (CHRHAGGTGMSASPSRTFKG) are disordered.

Belongs to the universal ribosomal protein uL3 family. As to quaternary structure, part of the 50S ribosomal subunit. Forms a cluster with proteins L14 and L19.

Its function is as follows. One of the primary rRNA binding proteins, it binds directly near the 3'-end of the 23S rRNA, where it nucleates assembly of the 50S subunit. The chain is Large ribosomal subunit protein uL3 from Rhodopirellula baltica (strain DSM 10527 / NCIMB 13988 / SH1).